The sequence spans 669 residues: Dymeclin (669 aa).

G2 is lipidated: N-myristoyl glycine.

The protein belongs to the dymeclin family. As to quaternary structure, interacts with GOLM1 and PPIB. In terms of processing, myristoylated in vitro; myristoylation is not essential for protein targeting to Golgi compartment.

It is found in the cytoplasm. The protein localises to the golgi apparatus. Its subcellular location is the membrane. Functionally, necessary for correct organization of Golgi apparatus. Involved in bone development. The sequence is that of Dymeclin (Dym) from Mus musculus (Mouse).